Consider the following 445-residue polypeptide: MATTILKNEGLDFHIKISTPLSEIDNDIQKELVDLTKKVKIAGFRAGKVPIAIVEKKYGASVRNDIIEKRINDSVNHVIKEHNLNIIGRPKIDDLQNEPNKPLEFTIKMELLPKIDIPDLKKISINRPKLEVSPDDVEEQLKKLAEMMKSYTKESKAKAKDGDQITMDAVGYVKDEAFEGGKLTDFKVVIGSNALIPGFEKQLIGSKAGSEVEVNVTFPENYHAKDLAGKDARFVVQVKAVHTAEPTVIDDEFAKKFQSNSLEELRTHFTKKIENESEEAISTIMKMNLFDQLEKLLDFDVPESLLDQEKNILKSETDKSEQDDSVFKDKSPEQVKEYYDKLALRRVRIGLMLAEYAKDKNLQVEPDDLRRIIMQQARSFPGQENMLFDFYKNNPRAVEQLKGPALEEKAVQHIFDNAVNLKEKKYNRKELEKLLESEEQRITAM.

Residues 162–247 form the PPIase FKBP-type domain; the sequence is GDQITMDAVG…VKAVHTAEPT (86 aa).

This sequence belongs to the FKBP-type PPIase family. Tig subfamily.

It is found in the cytoplasm. It catalyses the reaction [protein]-peptidylproline (omega=180) = [protein]-peptidylproline (omega=0). Its function is as follows. Involved in protein export. Acts as a chaperone by maintaining the newly synthesized protein in an open conformation. Functions as a peptidyl-prolyl cis-trans isomerase. The sequence is that of Trigger factor from Rickettsia bellii (strain OSU 85-389).